The following is a 459-amino-acid chain: Exodeoxyribonuclease 7 large subunit (459 aa).

It belongs to the XseA family. Heterooligomer composed of large and small subunits.

The protein resides in the cytoplasm. It carries out the reaction Exonucleolytic cleavage in either 5'- to 3'- or 3'- to 5'-direction to yield nucleoside 5'-phosphates.. Its function is as follows. Bidirectionally degrades single-stranded DNA into large acid-insoluble oligonucleotides, which are then degraded further into small acid-soluble oligonucleotides. The chain is Exodeoxyribonuclease 7 large subunit from Yersinia pestis bv. Antiqua (strain Antiqua).